The sequence spans 213 residues: Orotate phosphoribosyltransferase (213 aa).

Lysine 26 provides a ligand contact to 5-phospho-alpha-D-ribose 1-diphosphate. 34-35 is a binding site for orotate; that stretch reads FF. Residues 72-73, arginine 99, lysine 100, lysine 103, histidine 105, and 124-132 each bind 5-phospho-alpha-D-ribose 1-diphosphate; these read YK and DDVITAGTA. Residues threonine 128 and arginine 156 each coordinate orotate.

The protein belongs to the purine/pyrimidine phosphoribosyltransferase family. PyrE subfamily. As to quaternary structure, homodimer. The cofactor is Mg(2+).

It carries out the reaction orotidine 5'-phosphate + diphosphate = orotate + 5-phospho-alpha-D-ribose 1-diphosphate. It participates in pyrimidine metabolism; UMP biosynthesis via de novo pathway; UMP from orotate: step 1/2. In terms of biological role, catalyzes the transfer of a ribosyl phosphate group from 5-phosphoribose 1-diphosphate to orotate, leading to the formation of orotidine monophosphate (OMP). The sequence is that of Orotate phosphoribosyltransferase from Vibrio parahaemolyticus serotype O3:K6 (strain RIMD 2210633).